Here is a 479-residue protein sequence, read N- to C-terminus: Aspartyl/glutamyl-tRNA(Asn/Gln) amidotransferase subunit B (479 aa).

This sequence belongs to the GatB/GatE family. GatB subfamily. As to quaternary structure, heterotrimer of A, B and C subunits.

It carries out the reaction L-glutamyl-tRNA(Gln) + L-glutamine + ATP + H2O = L-glutaminyl-tRNA(Gln) + L-glutamate + ADP + phosphate + H(+). The enzyme catalyses L-aspartyl-tRNA(Asn) + L-glutamine + ATP + H2O = L-asparaginyl-tRNA(Asn) + L-glutamate + ADP + phosphate + 2 H(+). Its function is as follows. Allows the formation of correctly charged Asn-tRNA(Asn) or Gln-tRNA(Gln) through the transamidation of misacylated Asp-tRNA(Asn) or Glu-tRNA(Gln) in organisms which lack either or both of asparaginyl-tRNA or glutaminyl-tRNA synthetases. The reaction takes place in the presence of glutamine and ATP through an activated phospho-Asp-tRNA(Asn) or phospho-Glu-tRNA(Gln). This Streptococcus pyogenes serotype M3 (strain ATCC BAA-595 / MGAS315) protein is Aspartyl/glutamyl-tRNA(Asn/Gln) amidotransferase subunit B.